The primary structure comprises 309 residues: Histidine protein methyltransferase 1 homolog (309 aa).

2 disordered regions span residues 1–37 and 79–111; these read MSFK…FDSS and KPFK…NNKD. Residues 25-37 are compositionally biased toward basic and acidic residues; the sequence is EESKLDISEFDSS. Residues 84–109 are compositionally biased toward low complexity; it reads NQDNNNDNNVNSNDKNDNNNNNNNNN. Residues 132–136, G159, 179–181, 209–211, and S229 contribute to the S-adenosyl-L-methionine site; these read LWECS, QDY, and GDW.

The protein belongs to the methyltransferase superfamily. METTL18 family.

It is found in the cytoplasm. It localises to the cytosol. The protein resides in the nucleus. The protein localises to the nucleolus. It carries out the reaction L-histidyl-[protein] + S-adenosyl-L-methionine = N(tele)-methyl-L-histidyl-[protein] + S-adenosyl-L-homocysteine + H(+). Functionally, protein-L-histidine N-tele-methyltransferase that probably monomethylates RPL3. Through the methylation of RPL3 may regulate the dynamics of pre-rRNA processing, ribosome biogenesis, and translation. The polypeptide is Histidine protein methyltransferase 1 homolog (Dictyostelium discoideum (Social amoeba)).